We begin with the raw amino-acid sequence, 940 residues long: Reticulon-3 (940 aa).

Positions Met1–Thr24 are enriched in low complexity. Disordered stretches follow at residues Met1–Pro32, Ser71–His91, and Asp129–Leu182. Ala2 is subject to N-acetylalanine. Topologically, residues Ala2–Thr771 are cytoplasmic. Ser31 bears the Phosphoserine mark. A phosphoserine mark is found at Ser196, Ser204, Ser209, Ser212, Ser249, and Ser282. Disordered regions lie at residues Ala314–His335, Lys381–Ser405, and Glu428–Gln512. Residues Thr430–Thr447 are compositionally biased toward acidic residues. A compositionally biased stretch (basic and acidic residues) spans Thr472–Met490. The segment covering Tyr491–Gln512 has biased composition (polar residues). At Ser508 the chain carries Phosphoserine. Thr572 is modified (phosphothreonine). Phosphoserine occurs at positions 575, 576, and 652. Disordered stretches follow at residues Asn623–Leu655 and Gln672–Leu701. Residues Asp689–Asp699 show a composition bias toward polar residues. One can recognise a Reticulon domain in the interval Val752–Glu940. The helical intramembrane region spans Leu772–Leu795. Residues Ser796–Leu852 lie on the Cytoplasmic side of the membrane. The segment at residues Ile853–Met875 is an intramembrane region (helical). Residues Thr876–Gly879 lie on the Cytoplasmic side of the membrane. An intramembrane region (helical) is located at residues Ala880–Tyr902. The interval Val895–Glu940 is interaction with FADD. The Cytoplasmic portion of the chain corresponds to Glu903–Glu940. The interaction with BACE1 stretch occupies residues Gln908–Asp910.

In terms of assembly, homodimer. Interacts with RTN4. Isoform 2 interacts with BACE1, BACE2, BCL2 and FADD. Interacts with ATL2. Interacts with TMEM33. Interacts with ATL1. Interacts with ZFYVE27 and with KIF5A in a ZFYVE27-dependent manner. Interacts with RIGI. Interacts with TRIM25. As to expression, present in olfactory bulb, olfactory epithelium and retina (at protein level).

It is found in the endoplasmic reticulum membrane. It localises to the golgi apparatus membrane. In terms of biological role, may be involved in membrane trafficking in the early secretory pathway. Inhibits BACE1 activity and amyloid precursor protein processing. May induce caspase-8 cascade and apoptosis. May favor BCL2 translocation to the mitochondria upon endoplasmic reticulum stress. Induces the formation of endoplasmic reticulum tubules. Acts also as an inflammation-resolving regulator by interacting with both TRIM25 and RIGI, subsequently impairing RIGI 'Lys-63'-linked polyubiquitination leading to IRF3 and NF-kappa-B inhibition. In Rattus norvegicus (Rat), this protein is Reticulon-3 (Rtn3).